Here is a 420-residue protein sequence, read N- to C-terminus: D-tagatose-1,6-bisphosphate aldolase subunit GatZ (420 aa).

It belongs to the GatZ/KbaZ family. GatZ subfamily. Forms a complex with GatY.

It functions in the pathway carbohydrate metabolism; D-tagatose 6-phosphate degradation; D-glyceraldehyde 3-phosphate and glycerone phosphate from D-tagatose 6-phosphate: step 2/2. Its function is as follows. Component of the tagatose-1,6-bisphosphate aldolase GatYZ that is required for full activity and stability of the Y subunit. Could have a chaperone-like function for the proper and stable folding of GatY. When expressed alone, GatZ does not show any aldolase activity. Is involved in the catabolism of galactitol. This is D-tagatose-1,6-bisphosphate aldolase subunit GatZ from Shigella boydii serotype 18 (strain CDC 3083-94 / BS512).